Here is a 398-residue protein sequence, read N- to C-terminus: Cysteine protease ATG4A (398 aa).

C77 serves as the catalytic Nucleophile. Active-site residues include D279 and H281. Residues 393 to 396 carry the LIR motif; it reads FEIL.

Belongs to the peptidase C54 family. Interacts with ATG9A; the interaction is direct.

Its subcellular location is the cytoplasm. The enzyme catalyses [protein]-C-terminal L-amino acid-glycyl-phosphatidylethanolamide + H2O = [protein]-C-terminal L-amino acid-glycine + a 1,2-diacyl-sn-glycero-3-phosphoethanolamine. With respect to regulation, inhibited by N-ethylmaleimide. Redox-regulated during autophagy since reducing conditions activate ATG4A whereas an oxidizing environment such as the presence of H(2)O(2) inhibits its activity. Its function is as follows. Cysteine protease that plays a key role in autophagy by mediating both proteolytic activation and delipidation of ATG8 family proteins. The protease activity is required for proteolytic activation of ATG8 family proteins: cleaves the C-terminal amino acid of ATG8 proteins to reveal a C-terminal glycine. Exposure of the glycine at the C-terminus is essential for ATG8 proteins conjugation to phosphatidylethanolamine (PE) and insertion to membranes, which is necessary for autophagy. Preferred substrate is GABARAPL2 followed by MAP1LC3A and GABARAP. Protease activity is also required to counteract formation of high-molecular weight conjugates of ATG8 proteins (ATG8ylation): acts as a deubiquitinating-like enzyme that removes ATG8 conjugated to other proteins, such as ATG3. In addition to the protease activity, also mediates delipidation of ATG8 family proteins. Catalyzes delipidation of PE-conjugated forms of ATG8 proteins during macroautophagy. Compared to ATG4B, the major protein for proteolytic activation of ATG8 proteins, shows weaker ability to cleave the C-terminal amino acid of ATG8 proteins, while it displays stronger delipidation activity. Involved in phagophore growth during mitophagy independently of its protease activity and of ATG8 proteins: acts by regulating ATG9A trafficking to mitochondria and promoting phagophore-endoplasmic reticulum contacts during the lipid transfer phase of mitophagy. This chain is Cysteine protease ATG4A, found in Pongo abelii (Sumatran orangutan).